The following is a 522-amino-acid chain: Occludin (522 aa).

The disordered stretch occupies residues methionine 1 to asparagine 20. Residues methionine 1–arginine 66 lie on the Cytoplasmic side of the membrane. An MARVEL domain is found at serine 60–arginine 269. The helical transmembrane segment at isoleucine 67–tryptophan 89 threads the bilayer. Residues aspartate 90–arginine 135 lie on the Extracellular side of the membrane. The helical transmembrane segment at alanine 136–valine 160 threads the bilayer. Topologically, residues isoleucine 161–arginine 170 are cytoplasmic. The helical transmembrane segment at tyrosine 171–methionine 195 threads the bilayer. Residues glycine 196–glutamate 243 lie on the Extracellular side of the membrane. The cysteines at positions 216 and 237 are disulfide-linked. Residues alanine 244–valine 265 traverse the membrane as a helical segment. Over lysine 266–threonine 522 the chain is Cytoplasmic. Residue serine 302 is modified to Phosphoserine. Threonine 305 is modified (phosphothreonine). Phosphoserine occurs at positions 313, 321, and 340. A disordered region spans residues valine 360 to glutamate 407. Over residues arginine 367–threonine 376 the composition is skewed to polar residues. Phosphotyrosine is present on tyrosine 368. Serine 369 and serine 370 each carry phosphoserine. The segment covering alanine 381–serine 390 has biased composition (basic residues). Positions lysine 391–threonine 400 are enriched in basic and acidic residues. Phosphotyrosine is present on residues tyrosine 398 and tyrosine 402. 2 positions are modified to phosphothreonine; by PKC/PRKCH: threonine 403 and threonine 404. Phosphoserine is present on serine 408. Positions glutamate 414 to threonine 522 constitute an OCEL domain. Residues aspartate 426–glycine 489 adopt a coiled-coil conformation. Serine 490 carries the phosphoserine modification.

This sequence belongs to the ELL/occludin family. As to quaternary structure, interacts with TJP1/ZO1. Interacts with VAPA. Interacts with CLDN1, CLDN6, CLDN9, CLDN11, CLDN12 and CLDN17. Interacts with PLSCR1. Interacts with LSR, ILDR1 and ILDR2. Interacts with TJP2/ZO2. In terms of processing, dephosphorylated by PTPRJ. The tyrosine phosphorylation on Tyr-398 and Tyr-402 reduces its ability to interact with TJP1. Phosphorylation at Ser-490 also attenuates the interaction with TJP1. Post-translationally, (Microbial infection) Cleaved by S.pyogenes SpeB protease; leading to its degradation. Degradation by SpeB promotes bacterial translocation across the host epithelial barrier. As to expression, localized at tight junctions of both epithelial and endothelial cells. Highly expressed in kidney. Not detected in testis.

The protein localises to the cell membrane. It localises to the cell junction. Its subcellular location is the tight junction. May play a role in the formation and regulation of the tight junction (TJ) paracellular permeability barrier. It is able to induce adhesion when expressed in cells lacking tight junctions. In terms of biological role, (Microbial infection) Acts as a coreceptor for hepatitis C virus (HCV) in hepatocytes. The protein is Occludin (OCLN) of Homo sapiens (Human).